The following is a 212-amino-acid chain: Endoplasmic reticulum vesicle protein 25 (212 aa).

Residues 1 to 21 (MKSFAACVLLLCALFFEQVFA) form the signal peptide. Topologically, residues 22 to 181 (VRFDIPASTK…TNESTNRRVR (160 aa)) are lumenal. One can recognise a GOLD domain in the interval 34-122 (QVCIRDFVSE…SRSIELDIES (89 aa)). A helical membrane pass occupies residues 182 to 202 (NFSIAVIVVLVALGAWQVNYM). Residues 203 to 212 (KNFFRAKHII) are Cytoplasmic-facing.

It belongs to the EMP24/GP25L family.

It localises to the endoplasmic reticulum membrane. The protein localises to the golgi apparatus membrane. In terms of biological role, constituent of COPII-coated endoplasmic reticulum-derived transport vesicles. Required for efficient transport of a subset of secretory proteins to the Golgi. Facilitates retrograde transport from the Golgi to the endoplasmic reticulum. This Kluyveromyces lactis (strain ATCC 8585 / CBS 2359 / DSM 70799 / NBRC 1267 / NRRL Y-1140 / WM37) (Yeast) protein is Endoplasmic reticulum vesicle protein 25 (ERV25).